We begin with the raw amino-acid sequence, 562 residues long: uncharacterized protein (562 aa).

Transmembrane regions (helical) follow at residues 10–27 (IYPE…YWVG), 34–53 (FSLG…GQFD), 63–85 (IFFL…QGIA), 92–114 (ALFA…KIAG), and 155–177 (FSVI…AIVL). RCK C-terminal domains lie at 204-288 (TENA…HPDS) and 290-377 (DETQ…QLGV). Transmembrane regions (helical) follow at residues 387–404 (VAFW…GSLV), 408–430 (GNLP…FSWV), 443–465 (PTVW…ISAG), 475–497 (LGFS…AALV), 504–526 (FHPA…LGMI), and 539–561 (YTIT…ILIL).

The protein belongs to the AAE transporter (TC 2.A.81) family.

It localises to the cell membrane. This is an uncharacterized protein from Shewanella oneidensis (strain ATCC 700550 / JCM 31522 / CIP 106686 / LMG 19005 / NCIMB 14063 / MR-1).